A 166-amino-acid polypeptide reads, in one-letter code: Lymphocyte antigen 6G6e (166 aa).

Positions 1–18 are cleaved as a signal peptide; it reads MGPSSAFLGVLFLSGTLG. Positions 28-151 constitute a UPAR/Ly6 domain; that stretch reads LRCYTCSFAK…PPPNLPLMTL (124 aa). Cystine bridges form between Cys-30–Cys-52, Cys-33–Cys-39, Cys-110–Cys-129, and Cys-130–Cys-135.

As to quaternary structure, interacts with CHRNA4. O-glycosylated. Contains sialic acid residues.

The protein resides in the cell surface. The protein localises to the cell membrane. It localises to the cell projection. Its function is as follows. Believed to act as a modulator of nicotinic acetylcholine receptors (nAChRs) activity. In vitro potentiates alpha-3:beta-4-containing nAChRs maximum response by increasing peak current and slowing down receptor desensitization; the activity is dependent on its cell surface localization. This is Lymphocyte antigen 6G6e (Ly6g6e) from Mus musculus (Mouse).